Here is a 143-residue protein sequence, read N- to C-terminus: Transcriptional regulator MraZ (143 aa).

SpoVT-AbrB domains follow at residues 5-47 (TYTP…PRDE) and 76-119 (TDEQ…DAQA).

This sequence belongs to the MraZ family. As to quaternary structure, forms oligomers.

It is found in the cytoplasm. Its subcellular location is the nucleoid. The sequence is that of Transcriptional regulator MraZ from Mycolicibacterium smegmatis (strain ATCC 700084 / mc(2)155) (Mycobacterium smegmatis).